Reading from the N-terminus, the 357-residue chain is MSDTKNLNHDRQKALDNAISQIEKAFGRGAIMKLKQGAIEKIDSIPTGSIALDTALGIGGFPKGRIIEIFGPESSGKTTLALHVIAESQKKGGNCAFIDAEHALDIMYARKLGVNTGDLIVSQPDTGEQALHIVEYLICSGAIDVIVVDSVAALTPRAEIEGDMGDQHMGLQARLLSHALRKLTSIVSKANCILIFINQIRMKIGVVYGNPETTTGGNALKFYSSVRLDIRKVSAIKDKDVIIGNQTKVKVVKNKVAPPFKQVDFDIMYNEGISKVGEIIDMGVKLNIVEKAGSYYSYNSVRLGQGKENAKLYLKNNPSTADEIEQKIRASLQASDNDVSCFNAEVDSISDMDVPVF.

Residue 71–78 (GPESSGKT) participates in ATP binding.

This sequence belongs to the RecA family.

The protein resides in the cytoplasm. Functionally, can catalyze the hydrolysis of ATP in the presence of single-stranded DNA, the ATP-dependent uptake of single-stranded DNA by duplex DNA, and the ATP-dependent hybridization of homologous single-stranded DNAs. It interacts with LexA causing its activation and leading to its autocatalytic cleavage. This Ehrlichia ruminantium (strain Gardel) protein is Protein RecA.